The following is a 1012-amino-acid chain: Tolloid-like protein 2 (1012 aa).

The first 21 residues, 1–21 (MPLATTLGTLVLLLLLPLPRG), serve as a signal peptide directing secretion. The propeptide occupies 22–146 (AEVTGDHSNV…AKTFSARVRR (125 aa)). Residues 83-135 (KPSIDKPGHDTGGLEETSARWPNDTASNASIQAPRKDGKDATTFLPNPGTSNT) are disordered. The segment covering 126–135 (FLPNPGTSNT) has biased composition (polar residues). The region spanning 146-346 (RATTSRTERI…AQARKLYKCP (201 aa)) is the Peptidase M12A domain. N-linked (GlcNAc...) asparagine glycosylation is present at N168. Cystine bridges form between C189-C345, C209-C231, C211-C212, and C348-C374. A Zn(2+)-binding site is contributed by H239. Residue E240 is part of the active site. 2 residues coordinate Zn(2+): H243 and H249. CUB domains lie at 348 to 460 (CGET…YEAM) and 461 to 573 (CGGD…FFKE). N-linked (GlcNAc...) asparagine glycans are attached at residues N358 and N389. Disulfide bonds link C401–C423, C461–C487, C514–C536, C577–C589, C585–C598, C600–C613, C617–C643, C670–C692, C733–C744, C740–C753, C755–C768, and C773–C799. In terms of domain architecture, EGF-like 1; calcium-binding spans 573-614 (EVDECSWPDHGGCEQRCVNTLGSYTCACDPGYELAADKKTCE). A CUB 3 domain is found at 617–729 (CGGFITKLNG…RGFRAHFFSD (113 aa)). N625 carries N-linked (GlcNAc...) asparagine glycosylation. The region spanning 729–769 (DKDECAKDNGGCQQECVNTFGSYLCRCRNGYRLHENGHDCK) is the EGF-like 2; calcium-binding domain. CUB domains lie at 773–885 (CAYK…HSTE) and 886–1002 (CGGR…YTST). An N-linked (GlcNAc...) asparagine glycan is attached at N802. 3 cysteine pairs are disulfide-bonded: C826–C848, C886–C916, and C943–C965. Omega-N-methylarginine is present on residues R960 and R963.

The cofactor is Zn(2+).

The protein localises to the secreted. Its function is as follows. Protease which specifically processes pro-lysyl oxidase. Required for the embryonic development. Predominant protease, which in the development, influences dorsal-ventral patterning and skeletogenesis. This Mus musculus (Mouse) protein is Tolloid-like protein 2 (Tll2).